Here is a 1311-residue protein sequence, read N- to C-terminus: Transcriptional regulator ATRX homolog (1311 aa).

Residues 1–384 (MGKKNPNARH…KQKNKRKHIR (384 aa)) are disordered. Basic and acidic residues predominate over residues 28 to 40 (SRRESATESKSAS). Low complexity predominate over residues 61–83 (KASGKATVSSSSDSDQAVANSSA). Polar residues predominate over residues 114 to 125 (RGSQQKNVTIND). 2 positions are modified to phosphoserine: S126 and S127. A compositionally biased stretch (acidic residues) spans 155-166 (SDSEEVDEEEES). Residues 181-202 (KPEKNSSKASKESIEKRQKAQK) show a composition bias toward basic and acidic residues. The span at 219–237 (RRGSLSSERSSRASSSRAE) shows a compositional bias: low complexity. Over residues 241–265 (RPKRCVVRLKRVSLPKTKPAQKPKK) the composition is skewed to basic residues. S267, S268, and S270 each carry phosphoserine. Residues 290–306 (EADSDYEAPAAEEEEEE) show a composition bias toward acidic residues. A phosphoserine mark is found at S336, S338, S342, and S343. Residues 336–351 (SESDKGSSDFEPEEKQ) show a composition bias toward basic and acidic residues. Residues 352–361 (KKKGRKRIKK) show a composition bias toward basic residues. Residues 476-664 (ESQEKPGSGC…YCMIQFVKPN (189 aa)) form the Helicase ATP-binding domain. 489–496 (HCMGLGKT) serves as a coordination point for ATP. Residues 615-618 (DEGH) carry the DEGH box motif. The tract at residues 837-878 (ASSGKVKKRKTRNGNAGGGDSDSDLEMLGGLGGGSSVQKDDP) is disordered. A phosphoserine mark is found at S857 and S859. One can recognise a Helicase C-terminal domain in the interval 905-1085 (RLLQQCEAIG…SRHYNQTDLM (181 aa)). The tract at residues 1285–1311 (MAGGSVAHGPPAAPAPGFEPDKVYEID) is disordered.

Belongs to the SNF2/RAD54 helicase family.

The protein localises to the nucleus. The protein resides in the chromosome. The enzyme catalyses ATP + H2O = ADP + phosphate + H(+). In terms of biological role, global transcriptional regulator. Modifies gene expression by affecting chromatin. This Drosophila melanogaster (Fruit fly) protein is Transcriptional regulator ATRX homolog (XNP).